Here is a 450-residue protein sequence, read N- to C-terminus: MGSMEASTAPENGTAAAAAAAASTACNGAGGGGGAAAASNGGGVERRLRSSAASASWASHLPLEVGTRVMCRWRDQKLHPVKVIERRKSSTSSSPADYEYYVHYTEFNRRLDEWVKLEQLDLETVETDVDEKVEDKATSLKMTRHQKRKIDETHVEQGHEELDAASLREHEEFTKVKNIAKIELGRYEIDTWYFSPFPPEYNDSPKLFFCEFCLNFMKRKEQLQRHMKKCDLKHPPGDEIYRSGTLSMFEVDGKKNKVYGQNLCYLAKLFLDHKTLYYDVDLFLFYVLCECDDRGCHMVGYFSKEKHSEESYNLACILTLPPYQRKGYGKFLIAFSYELSKKEGKVGTPERPLSDLGLLSYRGYWTRVLLEILKKHKSNISIKELSDMTAIKADDILSTLQSLDLIQYRKGQHVICADPKVLDRHLKAAGRGGLEVDVSKLIWTPYKEQG.

The Tudor-knot domain occupies L63–L122. One can recognise an MYST-type HAT domain in the interval T174–P445. The C2HC MYST-type zinc-finger motif lies at L207–L232. K274 is subject to N6-acetyllysine; by autocatalysis. Acetyl-CoA contacts are provided by residues I317–T319 and Q324–K330. E350 serves as the catalytic Proton donor/acceptor. S354 contacts acetyl-CoA.

This sequence belongs to the MYST (SAS/MOZ) family. In terms of processing, autoacetylation at Lys-274 is required for proper function.

The protein resides in the nucleus. The catalysed reaction is L-lysyl-[protein] + acetyl-CoA = N(6)-acetyl-L-lysyl-[protein] + CoA + H(+). Histone acetyltransferase which may be involved in transcriptional activation. The chain is Putative MYST-like histone acetyltransferase 1 from Oryza sativa subsp. japonica (Rice).